We begin with the raw amino-acid sequence, 90 residues long: UPF0729 protein Bm1_03610 (90 aa).

It belongs to the UPF0729 family.

This is UPF0729 protein Bm1_03610 from Brugia malayi (Filarial nematode worm).